Here is a 234-residue protein sequence, read N- to C-terminus: MGQVTGDLGWRLSLLLLPLLLVQAGSWGFPTDPLSLQELRREFTVSLYLARKLLSEVQGYVHSFAESRLPGVNLDLLPLGYHLPNVSLTFQAWHHLSDSERLCFLATTLRPFPAMLGGLGTQGTWTSSEREQLWAMRLDLRDLHRHLRFQVLAAGFKCSKEEEDKEEEEEEEEEEKKLPLGALGGPNQVSSQVSWPQLLYTYQLLHSLELVLSRAVRDLLLLSLPRRPGSAWDS.

The first 28 residues, 1 to 28 (MGQVTGDLGWRLSLLLLPLLLVQAGSWG), serve as a signal peptide directing secretion. N85 carries an N-linked (GlcNAc...) asparagine glycan. The tract at residues 160 to 185 (KEEEDKEEEEEEEEEEKKLPLGALGG) is disordered. Residues 161–174 (EEEDKEEEEEEEEE) show a composition bias toward acidic residues.

Belongs to the IL-6 superfamily. Heterodimer with EBI3; not disulfide-linked. This heterodimer is known as interleukin IL-27. Post-translationally, O-glycosylated. In terms of tissue distribution, expressed in macrophages and dendritic cells.

The protein localises to the secreted. In terms of biological role, associates with EBI3 to form the IL-27 interleukin, a heterodimeric cytokine which functions in innate immunity. IL-27 has pro- and anti-inflammatory properties, that can regulate T-helper cell development, suppress T-cell proliferation, stimulate cytotoxic T-cell activity, induce isotype switching in B-cells, and that has diverse effects on innate immune cells. Among its target cells are CD4 T-helper cells which can differentiate in type 1 effector cells (TH1), type 2 effector cells (TH2) and IL17 producing helper T-cells (TH17). It drives rapid clonal expansion of naive but not memory CD4 T-cells. It also strongly synergizes with IL-12 to trigger interferon-gamma/IFN-gamma production of naive CD4 T-cells, binds to the cytokine receptor WSX-1/TCCR which appears to be required but not sufficient for IL-27-mediated signal transduction. IL-27 potentiate the early phase of TH1 response and suppress TH2 and TH17 differentiation. It induces the differentiation of TH1 cells via two distinct pathways, p38 MAPK/TBX21- and ICAM1/ITGAL/ERK-dependent pathways. It also induces STAT1, STAT3, STAT4 and STAT5 phosphorylation and activates TBX21/T-Bet via STAT1 with resulting IL12RB2 up-regulation, an event crucial to TH1 cell commitment. It suppresses the expression of GATA3, the inhibitor TH1 cells development. In CD8 T-cells, it activates STATs as well as GZMB. IL-27 reveals to be a potent inhibitor of TH17 cell development and of IL-17 production. Indeed IL27 alone is also able to inhibit the production of IL17 by CD4 and CD8 T-cells. While IL-27 suppressed the development of pro-inflammatory Th17 cells via STAT1, it inhibits the development of anti-inflammatory inducible regulatory T-cells, iTreg, independently of STAT1. IL-27 also has an effect on cytokine production, it suppresses pro-inflammatory cytokine production such as IL2, IL4, IL5 and IL6 and activates suppressors of cytokine signaling such as SOCS1 and SOCS3. Apart from suppression of cytokine production, IL-27 also antagonizes the effects of some cytokines such as IL6 through direct effects on T-cells. Another important role of IL-27 is its antitumor activity as well as its antiangiogenic activity with activation of production of antiangiogenic chemokines such as IP-10/CXCL10 and MIG/CXCL9. This chain is Interleukin-27 subunit alpha (Il27), found in Mus musculus (Mouse).